A 511-amino-acid chain; its full sequence is Glucans biosynthesis protein G (511 aa).

The signal sequence occupies residues 1-22; sequence MMKMRWLGAAIMLTLYASSSWA.

The protein belongs to the OpgD/OpgG family.

Its subcellular location is the periplasm. It functions in the pathway glycan metabolism; osmoregulated periplasmic glucan (OPG) biosynthesis. Its function is as follows. Involved in the biosynthesis of osmoregulated periplasmic glucans (OPGs). This Salmonella enteritidis PT4 (strain P125109) protein is Glucans biosynthesis protein G.